The primary structure comprises 948 residues: Insulin receptor substrate 1 (948 aa).

A PH domain is found at 8-109 (GMALSGYLKK…WLDKLLVLQR (102 aa)). One can recognise an IRS-type PTB domain in the interval 122–236 (YDQVWQVVIQ…SAMSAKTESN (115 aa)). The segment at 247-270 (PDLSHEPMRKRSSSANEASKPINV) is disordered. A phosphoserine mark is found at Ser286 and Ser287. Residues 304–329 (RNGTLSESSNQTYFGSNHGLRSNTIS) are compositionally biased toward polar residues. The tract at residues 304–373 (RNGTLSESSN…SDDNGSFSHY (70 aa)) is disordered. Ser342 carries the phosphoserine modification. Residue Tyr410 is modified to Phosphotyrosine; by INSR. The YXXM motif 1 signature appears at 410-413 (YIPM). The segment at 528-559 (ANRSQSSITKEGTSYSTSSNRQKKSTSAPLLS) is disordered. Polar residues predominate over residues 529–556 (NRSQSSITKEGTSYSTSSNRQKKSTSAP). Position 554 is a phosphoserine (Ser554). Positions 640–643 (YLEM) match the YXXM motif 2 motif. The disordered stretch occupies residues 703–734 (EKKSNSPLNETPCSLKPTDVESNSHDEHSTNN). A compositionally biased stretch (basic and acidic residues) spans 720-731 (TDVESNSHDEHS). Tyr891 is modified (phosphotyrosine; by INSR). The segment at 907–948 (YLKRGSRESPPVSACPGDGNTYAKIDFDQSDSSSSSSNIFNT) is disordered. Phosphoserine occurs at positions 912 and 915. Tyr928 carries the phosphotyrosine; by INSR modification. A compositionally biased stretch (low complexity) spans 936–948 (SDSSSSSSNIFNT).

Bindings to phosphatidylinositol 3-kinase and SHP2.

Functionally, activates phosphatidylinositol 3-kinase when bound to the regulatory p85 subunit. May mediate the control of various cellular processes by insulin-like peptides. When phosphorylated by the insulin receptor binds specifically to various cellular proteins containing SH2 domains. Involved in control of cell proliferation, cell size, and body and organ growth throughout development. Also has a role in a signaling pathway controlling the physiological response required to endure periods of low nutrient conditions. Insulin/insulin-like growth factor (IGF) signaling pathway has a role in regulating aging and is necessary in the ovary for vitellogenic maturation. The protein is Insulin receptor substrate 1 of Drosophila erecta (Fruit fly).